Here is a 1322-residue protein sequence, read N- to C-terminus: Transcription elongation factor SPT6-like (1322 aa).

Basic and acidic residues predominate over residues 1 to 17 (MNRIDEEPQIHEDPVEN). Disordered stretches follow at residues 1 to 65 (MNRI…KKDE) and 90 to 113 (KRLKKSSEEEDKINNDDDDDDLSH). Residues 18–33 (REEDDEDEDDQYEFDD) are compositionally biased toward acidic residues. The segment covering 48–65 (EQRHCSEKKSRSRRKKDE) has biased composition (basic and acidic residues). Over residues 97–110 (EEEDKINNDDDDDD) the composition is skewed to acidic residues. Residues 1017–1088 (GRIVQATVKK…QRYHVLLVCK (72 aa)) form the S1 motif domain.

This sequence belongs to the SPT6 family.

Its subcellular location is the nucleus. Its function is as follows. Transcription elongation factor that enhances the transcription elongation by RNA polymerase II (RNAPII). The chain is Transcription elongation factor SPT6-like from Arabidopsis thaliana (Mouse-ear cress).